Here is a 141-residue protein sequence, read N- to C-terminus: Galactose-6-phosphate isomerase subunit LacA (141 aa).

Belongs to the LacAB/RpiB family. In terms of assembly, heteromultimeric protein consisting of LacA and LacB.

The enzyme catalyses aldehydo-D-galactose 6-phosphate = keto-D-tagatose 6-phosphate. Its pathway is carbohydrate metabolism; D-galactose 6-phosphate degradation; D-tagatose 6-phosphate from D-galactose 6-phosphate: step 1/1. This is Galactose-6-phosphate isomerase subunit LacA from Streptococcus pneumoniae serotype 2 (strain D39 / NCTC 7466).